The following is a 1444-amino-acid chain: DNA polymerase III PolC-type (1444 aa).

The 157-residue stretch at 428–584 (YCVFDVETTG…FDAEATAYLA (157 aa)) folds into the Exonuclease domain.

This sequence belongs to the DNA polymerase type-C family. PolC subfamily.

The protein localises to the cytoplasm. The catalysed reaction is DNA(n) + a 2'-deoxyribonucleoside 5'-triphosphate = DNA(n+1) + diphosphate. In terms of biological role, required for replicative DNA synthesis. This DNA polymerase also exhibits 3' to 5' exonuclease activity. This is DNA polymerase III PolC-type from Listeria monocytogenes serovar 1/2a (strain ATCC BAA-679 / EGD-e).